The sequence spans 261 residues: Segregation and condensation protein A (261 aa).

The protein belongs to the ScpA family. Component of a cohesin-like complex composed of ScpA, ScpB and the Smc homodimer, in which ScpA and ScpB bind to the head domain of Smc. The presence of the three proteins is required for the association of the complex with DNA.

It is found in the cytoplasm. In terms of biological role, participates in chromosomal partition during cell division. May act via the formation of a condensin-like complex containing Smc and ScpB that pull DNA away from mid-cell into both cell halves. This chain is Segregation and condensation protein A, found in Ligilactobacillus salivarius (strain UCC118) (Lactobacillus salivarius).